The chain runs to 578 residues: Hyaluronan synthase 1 (578 aa).

Over 1–25 (MRQQDAPKPTPAACRCSGLARRVLT) the chain is Cytoplasmic. The helical transmembrane segment at 26–46 (IAFALLILGLMTWAYAAGVPL) threads the bilayer. Residues 47–52 (ASDRYG) are Extracellular-facing. A helical membrane pass occupies residues 53 to 73 (LLAFGLYGAFLSAHLVAQSLF). Residues 74-399 (AYLEHRRVAA…NALWWHRHHA (326 aa)) are Cytoplasmic-facing. A helical transmembrane segment spans residues 400-420 (WMTYEAVVSGLFPFFVAATVL). The Extracellular portion of the chain corresponds to 421-430 (RLFYAGRPWA). The helical transmembrane segment at 431–451 (LLWVLLCVQGVALAKAAFAAW) threads the bilayer. Residues 452 to 457 (LRGCLR) lie on the Cytoplasmic side of the membrane. A helical membrane pass occupies residues 458 to 478 (MVLLSLYAPLYMCGLLPAKFL). Residues 479-497 (ALVTMNQSGWGTSGRRKLA) lie on the Extracellular side of the membrane. A helical membrane pass occupies residues 498 to 518 (ANYVPLLPLALWALLLLGGLV). Topologically, residues 519 to 540 (RSVAHEARADWSGPSRAAEAYH) are cytoplasmic. A helical transmembrane segment spans residues 541–561 (LAAGAGAYVGYWVAMLTLYWV). At 562–578 (GVRRLCRRRTGGYRVQV) the chain is on the extracellular side.

Belongs to the NodC/HAS family. Mg(2+) is required as a cofactor. As to expression, widely expressed. Highly expressed in ovary followed by spleen, thymus, prostate, testes and large intestine. Weakly expressed in small intestine.

The protein resides in the membrane. The enzyme catalyses [hyaluronan](n) + UDP-N-acetyl-alpha-D-glucosamine = N-acetyl-beta-D-glucosaminyl-(1-&gt;4)-[hyaluronan](n) + UDP + H(+). It carries out the reaction N-acetyl-beta-D-glucosaminyl-(1-&gt;4)-[hyaluronan](n) + UDP-alpha-D-glucuronate = [hyaluronan](n+1) + UDP + H(+). Its pathway is glycan biosynthesis; hyaluronan biosynthesis. In terms of biological role, catalyzes the addition of GlcNAc or GlcUA monosaccharides to the nascent hyaluronan polymer. Therefore, it is essential to hyaluronan synthesis a major component of most extracellular matrices that has a structural role in tissues architectures and regulates cell adhesion, migration and differentiation. This is one of the isozymes catalyzing that reaction. Also able to catalyze the synthesis of chito-oligosaccharide depending on the substrate. This chain is Hyaluronan synthase 1 (HAS1), found in Homo sapiens (Human).